Reading from the N-terminus, the 891-residue chain is Receptor-like protein 50 (891 aa).

An N-terminal signal peptide occupies residues 1-22 (MITIIWSLCLIFCLSNSILVIA). The Extracellular segment spans residues 23–849 (KDLCLPDQRD…KEEKDKGLSW (827 aa)). 2 N-linked (GlcNAc...) asparagine glycosylation sites follow: Asn62 and Asn98. 7 LRR repeats span residues 105–130 (QHLQ…NFKY), 132–152 (RVLN…LRSL), 153–176 (SYLT…SMGN), 177–201 (LKHL…LGNL), 203–225 (YLTD…MGNL), 226–249 (KSLR…LGSL), and 250–272 (SNLT…SMSS). The N-linked (GlcNAc...) asparagine glycan is linked to Asn200. N-linked (GlcNAc...) asparagine glycosylation is found at Asn251, Asn285, and Asn306. 4 LRR repeats span residues 286 to 309 (LSSL…NMSS), 310 to 334 (LSKL…LFML), 336 to 358 (SLIK…NISS), and 359 to 383 (PSNL…ILKL). Asn355 carries N-linked (GlcNAc...) asparagine glycosylation. One copy of the LRR 12; degenerate repeat lies at 384-407 (VGLSALSLSFWDTGGIVDFSIFLQ). LRR repeat units follow at residues 408–436 (LKSL…MMHL), 438–453 (LSSC…LENQ), 454–477 (TSLY…LWRL), 478–504 (PTLR…IYSF), 506–519 (ASDN…PRAV), 520–544 (CEIG…EISN), 545–568 (KTLS…SLHG), 570–591 (LRSL…LINC), 593–614 (YLQF…WLKS), 615–641 (LPNL…SLSF), 642–665 (SKLR…YFVG), 712–736 (FEIY…IGIL), 737–760 (KELI…LSNL), 761–784 (SNLQ…LGEL), and 786–809 (FLAR…QIQS). 3 N-linked (GlcNAc...) asparagine glycosylation sites follow: Asn422, Asn442, and Asn452. N-linked (GlcNAc...) asparagine glycans are attached at residues Asn531, Asn544, Asn554, Asn590, and Asn605. N-linked (GlcNAc...) asparagine glycans are attached at residues Asn743 and Asn759. N-linked (GlcNAc...) asparagine glycans are attached at residues Asn791 and Asn811. Residues 850–870 (VAAAIGYVPGLFCGLAIGHIL) traverse the membrane as a helical segment. The Cytoplasmic segment spans residues 871–891 (TSYKRDWFMRIFSCFSSPLKK).

The protein belongs to the RLP family.

The protein resides in the cell membrane. In Arabidopsis thaliana (Mouse-ear cress), this protein is Receptor-like protein 50.